The chain runs to 396 residues: 8-amino-7-oxononanoate synthase (396 aa).

Arginine 29 is a substrate binding site. 116-117 provides a ligand contact to pyridoxal 5'-phosphate; sequence GY. Histidine 141 is a binding site for substrate. Residues serine 187, histidine 215, and threonine 243 each contribute to the pyridoxal 5'-phosphate site. Position 246 is an N6-(pyridoxal phosphate)lysine (lysine 246). Threonine 360 is a substrate binding site.

The protein belongs to the class-II pyridoxal-phosphate-dependent aminotransferase family. BioF subfamily. As to quaternary structure, homodimer. Requires pyridoxal 5'-phosphate as cofactor.

It carries out the reaction 6-carboxyhexanoyl-[ACP] + L-alanine + H(+) = (8S)-8-amino-7-oxononanoate + holo-[ACP] + CO2. It functions in the pathway cofactor biosynthesis; biotin biosynthesis. Its function is as follows. Catalyzes the decarboxylative condensation of pimeloyl-[acyl-carrier protein] and L-alanine to produce 8-amino-7-oxononanoate (AON), [acyl-carrier protein], and carbon dioxide. The sequence is that of 8-amino-7-oxononanoate synthase from Nitrosospira multiformis (strain ATCC 25196 / NCIMB 11849 / C 71).